The chain runs to 540 residues: Patellin-4 (540 aa).

The residue at position 53 (S53) is a Phosphoserine. Residues 61 to 183 are a coiled coil; sequence FADLKESEKK…EKKTEDVVTE (123 aa). The disordered stretch occupies residues 89 to 140; the sequence is LKTKKKESSPMKEKKEEVVKPEAEVEKKKEEAAEEKVEEEKKSEAVVTEEAP. The span at 94–140 shows a compositional bias: basic and acidic residues; the sequence is KESSPMKEKKEEVVKPEAEVEKKKEEAAEEKVEEEKKSEAVVTEEAP. K249 is covalently cross-linked (Glycyl lysine isopeptide (Lys-Gly) (interchain with G-Cter in ubiquitin)). Positions 258 to 428 constitute a CRAL-TRIO domain; sequence GEEFGEDLAT…QYGGFKTVDD (171 aa). In terms of domain architecture, GOLD spans 433-534; the sequence is NETVSEVVVK…KKKVLYRYRT (102 aa).

This sequence belongs to the patellin family.

It localises to the membrane. The protein localises to the cytoplasm. Carrier protein that may be involved in membrane-trafficking events associated with cell plate formation during cytokinesis. Binds to some hydrophobic molecules such as phosphoinositides and promotes their transfer between the different cellular sites. This Arabidopsis thaliana (Mouse-ear cress) protein is Patellin-4 (PATL4).